The sequence spans 198 residues: dITP/XTP pyrophosphatase (198 aa).

A substrate-binding site is contributed by 10–15; that stretch reads SGSDHK. Residues glutamate 43 and aspartate 72 each coordinate Mg(2+). Catalysis depends on aspartate 72, which acts as the Proton acceptor. Substrate is bound by residues serine 73, 154-157, lysine 177, and 182-183; these read FGYD and HR.

This sequence belongs to the HAM1 NTPase family. As to quaternary structure, homodimer. Mg(2+) serves as cofactor.

It catalyses the reaction XTP + H2O = XMP + diphosphate + H(+). It carries out the reaction dITP + H2O = dIMP + diphosphate + H(+). The enzyme catalyses ITP + H2O = IMP + diphosphate + H(+). Its function is as follows. Pyrophosphatase that catalyzes the hydrolysis of nucleoside triphosphates to their monophosphate derivatives, with a high preference for the non-canonical purine nucleotides XTP (xanthosine triphosphate), dITP (deoxyinosine triphosphate) and ITP. Seems to function as a house-cleaning enzyme that removes non-canonical purine nucleotides from the nucleotide pool, thus preventing their incorporation into DNA/RNA and avoiding chromosomal lesions. This is dITP/XTP pyrophosphatase from Leptospira biflexa serovar Patoc (strain Patoc 1 / Ames).